The primary structure comprises 214 residues: tRNA (guanine-N(7)-)-methyltransferase (214 aa).

Positions 45, 70, 97, and 119 each coordinate S-adenosyl-L-methionine. Asp119 is a catalytic residue. Residues Lys123, Asp155, and 192-195 (TEYE) contribute to the substrate site.

This sequence belongs to the class I-like SAM-binding methyltransferase superfamily. TrmB family.

The enzyme catalyses guanosine(46) in tRNA + S-adenosyl-L-methionine = N(7)-methylguanosine(46) in tRNA + S-adenosyl-L-homocysteine. It functions in the pathway tRNA modification; N(7)-methylguanine-tRNA biosynthesis. In terms of biological role, catalyzes the formation of N(7)-methylguanine at position 46 (m7G46) in tRNA. This Clostridioides difficile (strain 630) (Peptoclostridium difficile) protein is tRNA (guanine-N(7)-)-methyltransferase.